A 233-amino-acid polypeptide reads, in one-letter code: Lipoprotein-releasing system ATP-binding protein LolD (233 aa).

The region spanning 6–233 (LQCDNLCKRY…TAELSLMGAE (228 aa)) is the ABC transporter domain. 42 to 49 (GSSGSGKS) is an ATP binding site.

It belongs to the ABC transporter superfamily. Lipoprotein translocase (TC 3.A.1.125) family. The complex is composed of two ATP-binding proteins (LolD) and two transmembrane proteins (LolC and LolE).

The protein resides in the cell inner membrane. Part of the ABC transporter complex LolCDE involved in the translocation of mature outer membrane-directed lipoproteins, from the inner membrane to the periplasmic chaperone, LolA. Responsible for the formation of the LolA-lipoprotein complex in an ATP-dependent manner. The protein is Lipoprotein-releasing system ATP-binding protein LolD of Salmonella paratyphi A (strain ATCC 9150 / SARB42).